Reading from the N-terminus, the 110-residue chain is Cell cycle protein GpsB (110 aa).

The stretch at 32–73 (LDDVIKDYENYLEQIEKLQMENRRLQQALDKKESEASNVRNS) forms a coiled coil.

Belongs to the GpsB family. As to quaternary structure, forms polymers through the coiled coil domains. Interacts with PBP1, MreC and EzrA.

It is found in the cytoplasm. In terms of biological role, divisome component that associates with the complex late in its assembly, after the Z-ring is formed, and is dependent on DivIC and PBP2B for its recruitment to the divisome. Together with EzrA, is a key component of the system that regulates PBP1 localization during cell cycle progression. Its main role could be the removal of PBP1 from the cell pole after pole maturation is completed. Also contributes to the recruitment of PBP1 to the division complex. Not essential for septum formation. This is Cell cycle protein GpsB from Streptococcus agalactiae serotype Ia (strain ATCC 27591 / A909 / CDC SS700).